The chain runs to 82 residues: DNA-directed RNA polymerase subunit Rpo5 (82 aa).

This sequence belongs to the archaeal Rpo5/eukaryotic RPB5 RNA polymerase subunit family. As to quaternary structure, part of the RNA polymerase complex.

The protein resides in the cytoplasm. It carries out the reaction RNA(n) + a ribonucleoside 5'-triphosphate = RNA(n+1) + diphosphate. Functionally, DNA-dependent RNA polymerase (RNAP) catalyzes the transcription of DNA into RNA using the four ribonucleoside triphosphates as substrates. This is DNA-directed RNA polymerase subunit Rpo5 from Thermococcus kodakarensis (strain ATCC BAA-918 / JCM 12380 / KOD1) (Pyrococcus kodakaraensis (strain KOD1)).